The chain runs to 488 residues: Histamine H1 receptor (488 aa).

The Extracellular segment spans residues 1 to 38 (MSFLPGMTPVTLSNFSWALEDRMLEGNSTTTPTRQLMP). Residues Asn14 and Asn27 are each glycosylated (N-linked (GlcNAc...) asparagine). The helical transmembrane segment at 39 to 59 (LVVVLSSVSLVTVALNLLVLY) threads the bilayer. Over 60 to 73 (AVRSERKLHTVGNL) the chain is Cytoplasmic. The helical transmembrane segment at 74-98 (YIVSLSVADLIVGAVVMPMSILYLH) threads the bilayer. The Extracellular portion of the chain corresponds to 99–106 (RSAWILGR). Residues 107–132 (PLCLFWLSMDYVASTASIFSVFILCI) form a helical membrane-spanning segment. Cys109 and Cys189 are disulfide-bonded. Residues Asp116 and Thr121 each contribute to the histamine site. Residues 116–121 (DYVAST) form an important for agonist binding region. Residues 133–153 (DRYRSVQQPLRYLRYRTKTRA) are Cytoplasmic-facing. A phosphothreonine mark is found at Thr149 and Thr151. The chain crosses the membrane as a helical span at residues 154–173 (SATILGAWLLSFLWVIPILG). Residues 174-197 (WHHFMAPTSEPREKKCETDFYDVT) are Extracellular-facing. Residues 198-220 (WFKVMTAIINFYLPTLLMLWFYI) form a helical membrane-spanning segment. Residue Asn207 participates in histamine binding. Topologically, residues 221-417 (RIYKAVRRHC…LNRERKAAKQ (197 aa)) are cytoplasmic. Ser239 is subject to Phosphoserine. A compositionally biased stretch (basic and acidic residues) spans 259-274 (RMGKESPWEDPKRCSK). The interval 259–285 (RMGKESPWEDPKRCSKDASGVHTPMPS) is disordered. 5 positions are modified to phosphoserine: Ser345, Ser381, Ser383, Ser397, and Ser399. A helical membrane pass occupies residues 418-441 (LGCIMAAFILCWIPYFVFFMVIAF). An important for agonist binding region spans residues 425 to 429 (FILCW). Tyr432 is a histamine binding site. A disulfide bond links Cys442 and Cys445. Residues 442–447 (CKSCSN) lie on the Extracellular side of the membrane. Residues 448 to 470 (EPVHMFTIWLGYLNSTLNPLIYP) traverse the membrane as a helical segment. At 471-488 (LCNENFRKTFKRILRIPP) the chain is on the cytoplasmic side.

The protein belongs to the G-protein coupled receptor 1 family. In terms of processing, phosphorylation at sites in the second and third cytoplasmic loops independently contribute to agonist-induced receptor down-regulation.

The protein localises to the cell membrane. In terms of biological role, G-protein-coupled receptor for histamine, a biogenic amine that functions as an immune modulator and a neurotransmitter. Through the H1 receptor, histamine mediates the contraction of smooth muscles and increases capillary permeability due to contraction of terminal venules. Also mediates neurotransmission in the central nervous system and thereby regulates circadian rhythms, emotional and locomotor activities as well as cognitive functions. The sequence is that of Histamine H1 receptor from Cavia porcellus (Guinea pig).